The chain runs to 516 residues: Acetylcholine receptor subunit alpha-like (516 aa).

The first 21 residues, Met-1–Gly-21, serve as a signal peptide directing secretion. Residues Asn-22–Tyr-243 lie on the Extracellular side of the membrane. Residues Asn-45 and Asn-132 are each glycosylated (N-linked (GlcNAc...) asparagine). 2 disulfides stabilise this stretch: Cys-149–Cys-163 and Cys-222–Cys-223. N-linked (GlcNAc...) asparagine glycosylation occurs at Asn-233. 3 helical membrane-spanning segments follow: residues Thr-244–Leu-264, Leu-274–Pro-294, and Phe-306–Asn-326. At Val-327–Arg-465 the chain is on the cytoplasmic side. A helical transmembrane segment spans residues Pro-466–Ala-486.

It belongs to the ligand-gated ion channel (TC 1.A.9) family. Acetylcholine receptor (TC 1.A.9.1) subfamily.

The protein localises to the postsynaptic cell membrane. The protein resides in the cell membrane. Functionally, after binding acetylcholine, the AChR responds by an extensive change in conformation that affects all subunits and leads to opening of an ion-conducting channel across the plasma membrane. This chain is Acetylcholine receptor subunit alpha-like (ARA1), found in Manduca sexta (Tobacco hawkmoth).